Consider the following 418-residue polypeptide: UDP-N-acetylglucosamine 1-carboxyvinyltransferase (418 aa).

Residue 22–23 (KN) coordinates phosphoenolpyruvate. Arginine 92 is a UDP-N-acetyl-alpha-D-glucosamine binding site. Cysteine 116 functions as the Proton donor in the catalytic mechanism. Cysteine 116 carries the post-translational modification 2-(S-cysteinyl)pyruvic acid O-phosphothioketal. Residues 121-125 (RPVDQ), aspartate 306, and isoleucine 328 contribute to the UDP-N-acetyl-alpha-D-glucosamine site.

This sequence belongs to the EPSP synthase family. MurA subfamily.

The protein resides in the cytoplasm. It carries out the reaction phosphoenolpyruvate + UDP-N-acetyl-alpha-D-glucosamine = UDP-N-acetyl-3-O-(1-carboxyvinyl)-alpha-D-glucosamine + phosphate. Its pathway is cell wall biogenesis; peptidoglycan biosynthesis. Functionally, cell wall formation. Adds enolpyruvyl to UDP-N-acetylglucosamine. The polypeptide is UDP-N-acetylglucosamine 1-carboxyvinyltransferase (Acinetobacter baylyi (strain ATCC 33305 / BD413 / ADP1)).